Consider the following 424-residue polypeptide: Histidine--tRNA ligase (424 aa).

It belongs to the class-II aminoacyl-tRNA synthetase family. Homodimer.

The protein localises to the cytoplasm. It carries out the reaction tRNA(His) + L-histidine + ATP = L-histidyl-tRNA(His) + AMP + diphosphate + H(+). In Staphylococcus epidermidis (strain ATCC 12228 / FDA PCI 1200), this protein is Histidine--tRNA ligase.